The chain runs to 582 residues: uncharacterized protein (582 aa).

Transmembrane regions (helical) follow at residues 17–37, 57–77, 131–151, 156–176, 239–259, and 271–291; these read VAML…LPTV, LGAV…GAVY, MTAT…IMAI, ALTW…YWII, ALML…LIWF, and VGSL…VLMA. Residues 17 to 300 form the ABC transmembrane type-1 domain; it reads VAMLMMLQLV…ATMTLAVLPR (284 aa). The region spanning 335-571 is the ABC transporter domain; the sequence is VRLAGATFTY…CPTYAEFAAS (237 aa). Residue 369-376 coordinates ATP; that stretch reads GSTGSGKS.

This sequence belongs to the ABC transporter superfamily.

The protein localises to the cell membrane. This is an uncharacterized protein from Mycobacterium tuberculosis (strain CDC 1551 / Oshkosh).